The sequence spans 318 residues: Thymidylate synthase (318 aa).

Residues Arg25 and 180-181 each bind dUMP; that span reads RR. Catalysis depends on Cys200, which acts as the Nucleophile. Residues 220–223, Asn231, and 261–263 each bind dUMP; these read RSGD and HIY. Asp223 serves as a coordination point for (6R)-5,10-methylene-5,6,7,8-tetrahydrofolate. Ala317 lines the (6R)-5,10-methylene-5,6,7,8-tetrahydrofolate pocket.

It belongs to the thymidylate synthase family. Bacterial-type ThyA subfamily. As to quaternary structure, homodimer.

It localises to the cytoplasm. It catalyses the reaction dUMP + (6R)-5,10-methylene-5,6,7,8-tetrahydrofolate = 7,8-dihydrofolate + dTMP. The protein operates within pyrimidine metabolism; dTTP biosynthesis. Catalyzes the reductive methylation of 2'-deoxyuridine-5'-monophosphate (dUMP) to 2'-deoxythymidine-5'-monophosphate (dTMP) while utilizing 5,10-methylenetetrahydrofolate (mTHF) as the methyl donor and reductant in the reaction, yielding dihydrofolate (DHF) as a by-product. This enzymatic reaction provides an intracellular de novo source of dTMP, an essential precursor for DNA biosynthesis. The protein is Thymidylate synthase of Lactobacillus helveticus (strain DPC 4571).